The chain runs to 550 residues: CTP synthase (550 aa).

An amidoligase domain region spans residues 1 to 270; sequence MTKFVFVTGG…DRLICEELRL (270 aa). CTP is bound at residue S13. Residue S13 participates in UTP binding. ATP-binding positions include 14 to 19 and D71; that span reads SLGKGI. Residues D71 and E144 each contribute to the Mg(2+) site. Residues 151–153, 191–196, and K227 each bind CTP; these read DIE and KTKPTQ. UTP-binding positions include 191 to 196 and K227; that span reads KTKPTQ. The 253-residue stretch at 295–547 folds into the Glutamine amidotransferase type-1 domain; sequence TIGMVGKYVD…VEAALAGQQR (253 aa). G356 contributes to the L-glutamine binding site. C383 functions as the Nucleophile; for glutamine hydrolysis in the catalytic mechanism. Residues 384 to 387, E407, and R473 contribute to the L-glutamine site; that span reads LGMQ. Catalysis depends on residues H520 and E522.

Belongs to the CTP synthase family. As to quaternary structure, homotetramer.

The enzyme catalyses UTP + L-glutamine + ATP + H2O = CTP + L-glutamate + ADP + phosphate + 2 H(+). The catalysed reaction is L-glutamine + H2O = L-glutamate + NH4(+). It catalyses the reaction UTP + NH4(+) + ATP = CTP + ADP + phosphate + 2 H(+). The protein operates within pyrimidine metabolism; CTP biosynthesis via de novo pathway; CTP from UDP: step 2/2. Its activity is regulated as follows. Allosterically activated by GTP, when glutamine is the substrate; GTP has no effect on the reaction when ammonia is the substrate. The allosteric effector GTP functions by stabilizing the protein conformation that binds the tetrahedral intermediate(s) formed during glutamine hydrolysis. Inhibited by the product CTP, via allosteric rather than competitive inhibition. Catalyzes the ATP-dependent amination of UTP to CTP with either L-glutamine or ammonia as the source of nitrogen. Regulates intracellular CTP levels through interactions with the four ribonucleotide triphosphates. The protein is CTP synthase of Cupriavidus pinatubonensis (strain JMP 134 / LMG 1197) (Cupriavidus necator (strain JMP 134)).